The following is a 372-amino-acid chain: Cytochrome b (372 aa).

Helical transmembrane passes span 32 to 52 (LGFN…CLSW), 77 to 99 (FIIR…IHII), 114 to 134 (VWFF…IGYT), and 180 to 200 (LHSI…AHFF). His83 and His97 together coordinate heme b. Heme b contacts are provided by His184 and His198. His203 is an a ubiquinone binding site. 4 helical membrane passes run 228–248 (YYLR…YYIC), 297–317 (LLFV…LIFI), 330–350 (LVLF…VLCF), and 351–371 (PLWM…VCRL).

The protein belongs to the cytochrome b family. In terms of assembly, the main subunits of complex b-c1 are: cytochrome b, cytochrome c1 and the Rieske protein. Heme b serves as cofactor.

It is found in the mitochondrion inner membrane. In terms of biological role, component of the ubiquinol-cytochrome c reductase complex (complex III or cytochrome b-c1 complex) that is part of the mitochondrial respiratory chain. The b-c1 complex mediates electron transfer from ubiquinol to cytochrome c. Contributes to the generation of a proton gradient across the mitochondrial membrane that is then used for ATP synthesis. The polypeptide is Cytochrome b (MT-CYB) (Trypanoplasma borreli).